The following is a 318-amino-acid chain: Olfactory receptor 56A1 (318 aa).

Residues 1-32 (MIQPMASPSNSSTVPVSEFLLICFPNFQSWQH) are Extracellular-facing. N-linked (GlcNAc...) asparagine glycosylation is present at N10. Residues 33 to 53 (WLSLPLSLLFLLAMGANTTLL) form a helical membrane-spanning segment. Residues 54 to 61 (ITIQLEAS) lie on the Cytoplasmic side of the membrane. The chain crosses the membrane as a helical span at residues 62–82 (LHQPLYYLLSLLSLLDIVLCL). Over 83–106 (TVIPKVLAIFWYDLRSISFPACFL) the chain is Extracellular. Residues C104 and C196 are joined by a disulfide bond. A helical membrane pass occupies residues 107–127 (QMFIMNSFLPMESCTFMVMAY). The Cytoplasmic portion of the chain corresponds to 128-146 (DRYVAICHPLRYPSIITNQ). The chain crosses the membrane as a helical span at residues 147 to 167 (FVAKASVFIVVRNALLTAPIP). Over 168-203 (ILTSLLHYCGENVIENCICANLSVSRLSCDNFTLNR) the chain is Extracellular. N-linked (GlcNAc...) asparagine glycans are attached at residues N188 and N198. A helical transmembrane segment spans residues 204–224 (IYQFVAGWTLLGSDLFLIFLS). Residues 225-244 (YTFILRAVLRFKAEGAAVKA) lie on the Cytoplasmic side of the membrane. The chain crosses the membrane as a helical span at residues 245-265 (LSTCGSHFILILFFSTILLVV). Residues 266–280 (VLTNVARKKVPMDIL) lie on the Extracellular side of the membrane. The helical transmembrane segment at 281-301 (ILLNVLHHLIPPALNPIVYGV) threads the bilayer. Residues 302-318 (RTKEIKQGIQKLLQRGR) lie on the Cytoplasmic side of the membrane.

The protein belongs to the G-protein coupled receptor 1 family.

It localises to the cell membrane. Functionally, odorant receptor. The chain is Olfactory receptor 56A1 (OR56A1) from Homo sapiens (Human).